A 367-amino-acid polypeptide reads, in one-letter code: tRNA(Ile)-lysidine synthase (367 aa).

Residue 32–37 (SGGSDS) coordinates ATP.

Belongs to the tRNA(Ile)-lysidine synthase family.

It is found in the cytoplasm. It catalyses the reaction cytidine(34) in tRNA(Ile2) + L-lysine + ATP = lysidine(34) in tRNA(Ile2) + AMP + diphosphate + H(+). Its function is as follows. Ligates lysine onto the cytidine present at position 34 of the AUA codon-specific tRNA(Ile) that contains the anticodon CAU, in an ATP-dependent manner. Cytidine is converted to lysidine, thus changing the amino acid specificity of the tRNA from methionine to isoleucine. This Hyphomonas neptunium (strain ATCC 15444) protein is tRNA(Ile)-lysidine synthase.